We begin with the raw amino-acid sequence, 468 residues long: Mitochondrial distribution and morphology protein 10 (468 aa).

The protein belongs to the MDM10 family. Component of the ER-mitochondria encounter structure (ERMES) or MDM complex, composed of MMM1, MDM10, MDM12 and MDM34. Associates with the mitochondrial outer membrane sorting assembly machinery SAM(core) complex.

It is found in the mitochondrion outer membrane. Component of the ERMES/MDM complex, which serves as a molecular tether to connect the endoplasmic reticulum and mitochondria. Components of this complex are involved in the control of mitochondrial shape and protein biogenesis and may function in phospholipid exchange. MDM10 is involved in the late assembly steps of the general translocase of the mitochondrial outer membrane (TOM complex). Functions in the TOM40-specific route of the assembly of outer membrane beta-barrel proteins, including the association of TOM40 with the receptor TOM22 and small TOM proteins. Can associate with the SAM(core) complex as well as the MDM12-MMM1 complex, both involved in late steps of the major beta-barrel assembly pathway, that is responsible for biogenesis of all outer membrane beta-barrel proteins. May act as a switch that shuttles between both complexes and channels precursor proteins into the TOM40-specific pathway. Plays a role in mitochondrial morphology and in the inheritance of mitochondria. The chain is Mitochondrial distribution and morphology protein 10 from Blastomyces gilchristii (strain SLH14081) (Blastomyces dermatitidis).